Reading from the N-terminus, the 166-residue chain is Small ribosomal subunit protein eS10 (166 aa).

The tract at residues 95–166 (RRQTRPETAR…FGRGRGQQPQ (72 aa)) is disordered. Over residues 98–129 (TRPETARPRPKGLEGERPARLARGEGDRDAYR) the composition is skewed to basic and acidic residues. Over residues 143–154 (AGAGAATEFQFR) the composition is skewed to low complexity. A compositionally biased stretch (gly residues) spans 155–166 (GGFGRGRGQQPQ).

Belongs to the eukaryotic ribosomal protein eS10 family. As to quaternary structure, component of the small ribosomal subunit.

It is found in the cytoplasm. Its subcellular location is the nucleus. The protein localises to the nucleolus. Functionally, component of the 40S ribosomal subunit. The ribosome is a large ribonucleoprotein complex responsible for the synthesis of proteins in the cell. The protein is Small ribosomal subunit protein eS10 (rps10) of Ictalurus punctatus (Channel catfish).